The sequence spans 151 residues: MEQPPPADQPQQPPPPTLTNPRFTLELEFVSSLANPYYLSHLAVTYPNLLGINKSGDDSDVNNDSTDPDAQGFAAYLAYLYSYWKTPEYAQFLTHPGATLRALRLLQEETFRRDIIRPDVIERLAGTDIAAEPVDPAAESGDQEGEQAKAS.

Over residues 1-18 (MEQPPPADQPQQPPPPTL) the composition is skewed to pro residues. Disordered stretches follow at residues 1-20 (MEQP…TLTN) and 131-151 (AEPV…AKAS).

The protein belongs to the Mediator complex subunit 31 family. Component of the Mediator complex.

It is found in the nucleus. Functionally, component of the Mediator complex, a coactivator involved in the regulated transcription of nearly all RNA polymerase II-dependent genes. Mediator functions as a bridge to convey information from gene-specific regulatory proteins to the basal RNA polymerase II transcription machinery. Mediator is recruited to promoters by direct interactions with regulatory proteins and serves as a scaffold for the assembly of a functional preinitiation complex with RNA polymerase II and the general transcription factors. This is Mediator of RNA polymerase II transcription subunit 31 (soh1) from Aspergillus niger (strain ATCC MYA-4892 / CBS 513.88 / FGSC A1513).